We begin with the raw amino-acid sequence, 172 residues long: MEHVSKRSIGQFFKRKTSTVDGSKSQKCGTTNQLRKLLHKRRVQKQAVPVESQYRIPGDFRDNQSVRVKNSMYNSSPSVTPSTHHINERYVRYDINTRPLVVVLAISIVFFGCLLVLKDIIIQSSENILSVSKWKIIGASFMGTPYTGLLTGLVGPLLSPFSAVSSWLSFIF.

Residues 1–101 (MEHVSKRSIG…RYDINTRPLV (101 aa)) lie on the Lumenal side of the membrane. A helical membrane pass occupies residues 102–122 (VVLAISIVFFGCLLVLKDIII). At 123 to 145 (QSSENILSVSKWKIIGASFMGTP) the chain is on the cytoplasmic side. A helical transmembrane segment spans residues 146–164 (YTGLLTGLVGPLLSPFSAV). Over 165 to 172 (SSWLSFIF) the chain is Lumenal.

The protein localises to the endoplasmic reticulum membrane. This is an uncharacterized protein from Saccharomyces cerevisiae (strain ATCC 204508 / S288c) (Baker's yeast).